A 444-amino-acid polypeptide reads, in one-letter code: Na(+)-translocating NADH-quinone reductase subunit A (444 aa).

Belongs to the NqrA family. In terms of assembly, composed of six subunits; NqrA, NqrB, NqrC, NqrD, NqrE and NqrF.

The enzyme catalyses a ubiquinone + n Na(+)(in) + NADH + H(+) = a ubiquinol + n Na(+)(out) + NAD(+). Its function is as follows. NQR complex catalyzes the reduction of ubiquinone-1 to ubiquinol by two successive reactions, coupled with the transport of Na(+) ions from the cytoplasm to the periplasm. NqrA to NqrE are probably involved in the second step, the conversion of ubisemiquinone to ubiquinol. The polypeptide is Na(+)-translocating NADH-quinone reductase subunit A (Shewanella frigidimarina (strain NCIMB 400)).